Here is a 385-residue protein sequence, read N- to C-terminus: MQDVEEFRAQVRGWLADNLAGEFAALKGLGGPGREHEAFEERRAWNQRLAAAGLTCLGWPEEHGGRGLSTAHRVAFYEEYARADAPDKVNHFGEELLGPTLIAFGTPQQQRRFLPRIRDVTELWCQGYSEPGAGSDLASVATTAELDGDQWVINGQKVWTSLAHLSQWCFVLARTEKGSQRHAGLSYLLVPLDQPGVQIRPIVQITGTAEFNEVFFDDARTDADLVVGAPGDGWRVAMATLTFERGVSTLGQQIVYARELSNLVELARRTAAADDPLIRERLTRAWTGLRAMRSYALATMEGPAVEQPGQDNVSKLLWANWHRNLGELAMDVIGKPGMTMPDGEFDEWQRLYLFTRADTIYGGSNEIQRNIIAERVLGLPREAKG.

Residues 126-129 (QGYS) and Ser161 contribute to the FAD site. Glu244 acts as the Proton acceptor in catalysis. FAD is bound at residue 364 to 366 (SNE).

Belongs to the acyl-CoA dehydrogenase family. In terms of assembly, heterotetramer composed of 2 IpdE1 subunits and 2 IpdE2 subunits. FAD is required as a cofactor.

It catalyses the reaction 3-[(3aS,4S,5R,7aS)-5-hydroxy-7a-methyl-1-oxo-octahydro-1H-inden-4-yl]propanoyl-CoA + A = (2E)-3-[(3aS,4S,5R,7aS)-5-hydroxy-7a-methyl-1-oxo-octahydro-1H-inden-4-yl]prop-2-enoyl-CoA + AH2. It participates in steroid metabolism; cholesterol degradation. Involved in cholesterol degradation. Catalyzes the dehydrogenation of 5OH-HIP-CoA to 5OH-HIPE-CoA. Can also use octanoyl-CoA and dihydroferuloyl-CoA, with lower efficiency. Cannot use 3-oxo-4-pregnene-20-carboxyl-CoA (3-OPC-CoA). This Mycobacterium tuberculosis (strain ATCC 25618 / H37Rv) protein is Acyl-CoA dehydrogenase IpdE1.